Consider the following 151-residue polypeptide: Putative coiled-coil-helix-coiled-coil-helix domain-containing protein CHCHD2P9, mitochondrial (151 aa).

A mitochondrion-targeting transit peptide spans 1-9 (MPRGSRSRT). Disordered stretches follow at residues 1–50 (MPRG…AAAP) and 75–110 (TQGH…PAQQ). A compositionally biased stretch (low complexity) spans 10–26 (SRMAPPASRAPQMRAAP). Residues 27 to 38 (RPAPVAQPPAAA) show a composition bias toward pro residues. Composition is skewed to low complexity over residues 39–50 (PPSAVGSSAAAP) and 100–110 (QEPQGTQPAQQ). A CHCH domain is found at 111 to 151 (QQPCFYGIKQFLECAQNQGDIKLCEDFSKVLKQCRLAKGLA). Short sequence motifs (cx9C motif) lie at residues 114-124 (CFYGIKQFLEC) and 134-144 (CEDFSKVLKQC). 2 disulfide bridges follow: Cys-114–Cys-144 and Cys-124–Cys-134.

The protein localises to the mitochondrion. The sequence is that of Putative coiled-coil-helix-coiled-coil-helix domain-containing protein CHCHD2P9, mitochondrial (CHCHD2P9) from Homo sapiens (Human).